The chain runs to 1125 residues: Kinase and exchange factor for Rac B (1125 aa).

Disordered regions lie at residues 50–175, 247–287, and 322–362; these read VTGG…ASIN, SVPG…GGKF, and KTRD…VNSD. The segment covering 59–91 has biased composition (low complexity); sequence NNQQQQQNNNNNNNNNNNNNNNNNNNNNNNNNN. Polar residues predominate over residues 92–106; the sequence is SGEISSNNSTPSILF. Over residues 113-124 the composition is skewed to pro residues; it reads TAPPAPPQPTTP. The span at 137-161 shows a compositional bias: low complexity; that stretch reads NINQQPIGGVNNNNNNNNKDSPSNK. In terms of domain architecture, DH spans 380–571; the sequence is KRRQVSLQIL…KSTVDYVKEK (192 aa). The PH domain occupies 601 to 822; that stretch reads RYVREGMLTE…WIQAIHANII (222 aa). Disordered stretches follow at residues 693-729 and 761-791; these read INNM…SNNN and SNNN…YSNG. A compositionally biased stretch (low complexity) spans 694–729; the sequence is NNMTNNDSKSKNNNNNNSNGNNNNNNINSNSNSNNN. The Protein kinase domain maps to 848–1117; sequence IKLCEQIGSG…QLVQKLTKML (270 aa). ATP is bound by residues 854–862 and Lys876; that span reads IGSGGSGCT. The active-site Proton acceptor is the Asp971.

It belongs to the protein kinase superfamily. STE Ser/Thr protein kinase family. The cofactor is Mg(2+).

It carries out the reaction L-seryl-[protein] + ATP = O-phospho-L-seryl-[protein] + ADP + H(+). It catalyses the reaction L-threonyl-[protein] + ATP = O-phospho-L-threonyl-[protein] + ADP + H(+). This is Kinase and exchange factor for Rac B from Dictyostelium discoideum (Social amoeba).